A 585-amino-acid chain; its full sequence is Lipoprotein LpqB (585 aa).

The signal sequence occupies residues 1–17 (MGRKLLGLLMLAVLLAG). Cys-18 carries N-palmitoyl cysteine lipidation. Cys-18 carries S-diacylglycerol cysteine lipidation. 2 disordered regions span residues 24 to 48 (SSAP…TPGM) and 560 to 585 (PSAD…VLPG).

Belongs to the LpqB lipoprotein family.

It localises to the cell membrane. In Mycolicibacterium paratuberculosis (strain ATCC BAA-968 / K-10) (Mycobacterium paratuberculosis), this protein is Lipoprotein LpqB.